The sequence spans 167 residues: Early nodulin-like protein 16 (167 aa).

The signal sequence occupies residues 1 to 24; it reads MARVAVLVAGAVLAFLLAATNVTA. In terms of domain architecture, Phytocyanin spans 25-126; it reads KRWTVGDNKF…GMKLAVLVEK (102 aa). 4 N-linked (GlcNAc...) asparagine glycosylation sites follow: asparagine 40, asparagine 71, asparagine 86, and asparagine 99. Cysteines 78 and 114 form a disulfide. Asparagine 138 carries the GPI-anchor amidated asparagine lipid modification. The propeptide at 139 to 167 is removed in mature form; the sequence is SARRTFSVSGFAYQFLIPVAVFAAVGTRY.

The protein belongs to the early nodulin-like (ENODL) family.

The protein resides in the cell membrane. In terms of biological role, may act as a carbohydrate transporter. In Arabidopsis thaliana (Mouse-ear cress), this protein is Early nodulin-like protein 16.